We begin with the raw amino-acid sequence, 257 residues long: Protein patched homolog 1 (257 aa).

Residues 1–199 (AKLQTGTAYL…LDDILKSFSD (199 aa)) lie on the Extracellular side of the membrane. N-linked (GlcNAc...) asparagine glycosylation is found at N75, N114, and N177. Residues 200 to 220 (ISVIRVASGYLLMLAYACLTM) traverse the membrane as a helical segment. The SSD domain maps to 201-257 (SVIRVASGYLLMLAYACLTMLRWDCAKSQGAVGLAGVLLVALSVAAGLGLCSLIGIS). Over 221–235 (LRWDCAKSQGAVGLA) the chain is Cytoplasmic. A helical transmembrane segment spans residues 236–256 (GVLLVALSVAAGLGLCSLIGI).

Belongs to the patched family. In terms of processing, glycosylation is necessary for SHH binding. In terms of tissue distribution, in the eye, detected in neural retina, iris, retinal pigment epithelium, but not in lens.

Its subcellular location is the membrane. Acts as a receptor for sonic hedgehog (SHH), indian hedgehog (IHH) and desert hedgehog (DHH). Associates with the smoothened protein (SMO) to transduce the hedgehog's proteins signal. This chain is Protein patched homolog 1 (PTC1), found in Cynops pyrrhogaster (Japanese fire-bellied newt).